Here is a 210-residue protein sequence, read N- to C-terminus: Somatotropin (210 aa).

The first 22 residues, Met-1–Ala-22, serve as a signal peptide directing secretion. His-38 is a binding site for Zn(2+). Cysteines 71 and 183 form a disulfide. Glu-192 serves as a coordination point for Zn(2+). Cysteines 200 and 208 form a disulfide.

It belongs to the somatotropin/prolactin family.

It localises to the secreted. Functionally, growth hormone plays an important role in growth control and is involved in the regulation of several anabolic processes. Implicated as an osmoregulatory substance important for seawater adaptation. The sequence is that of Somatotropin (gh) from Oncorhynchus keta (Chum salmon).